Consider the following 552-residue polypeptide: Thermosome subunit beta (552 aa).

This sequence belongs to the TCP-1 chaperonin family. As to quaternary structure, forms a Heterooligomeric complex of two stacked nine-membered rings; one of alpha and the other of beta subunits. Post-translationally, the N-terminus is blocked.

Its function is as follows. Molecular chaperone; binds unfolded polypeptides in vitro, and has a weak ATPase activity. The sequence is that of Thermosome subunit beta (thsB) from Sulfurisphaera tokodaii (strain DSM 16993 / JCM 10545 / NBRC 100140 / 7) (Sulfolobus tokodaii).